Consider the following 170-residue polypeptide: tRNA-splicing endonuclease (170 aa).

Active-site residues include tyrosine 110, histidine 116, and lysine 147.

The protein belongs to the tRNA-intron endonuclease family. Archaeal short subfamily. In terms of assembly, homotetramer; although the tetramer contains four active sites, only two participate in the cleavage. Therefore, it should be considered as a dimer of dimers.

The catalysed reaction is pretRNA = a 3'-half-tRNA molecule with a 5'-OH end + a 5'-half-tRNA molecule with a 2',3'-cyclic phosphate end + an intron with a 2',3'-cyclic phosphate and a 5'-hydroxyl terminus.. Its function is as follows. Endonuclease that removes tRNA introns. Cleaves pre-tRNA at the 5'- and 3'-splice sites to release the intron. The products are an intron and two tRNA half-molecules bearing 2',3' cyclic phosphate and 5'-OH termini. Recognizes a pseudosymmetric substrate in which 2 bulged loops of 3 bases are separated by a stem of 4 bp. The sequence is that of tRNA-splicing endonuclease from Pyrococcus furiosus (strain ATCC 43587 / DSM 3638 / JCM 8422 / Vc1).